The following is a 309-amino-acid chain: Coproporphyrin III ferrochelatase (309 aa).

Fe-coproporphyrin III contacts are provided by residues Tyr-12, Thr-14, Arg-29, 45–46 (RY), Ser-53, and Tyr-124. 2 residues coordinate Fe(2+): His-182 and Glu-263.

It belongs to the ferrochelatase family. As to quaternary structure, monomer.

The protein localises to the cytoplasm. It catalyses the reaction Fe-coproporphyrin III + 2 H(+) = coproporphyrin III + Fe(2+). It participates in porphyrin-containing compound metabolism; protoheme biosynthesis. Functionally, involved in coproporphyrin-dependent heme b biosynthesis. Catalyzes the insertion of ferrous iron into coproporphyrin III to form Fe-coproporphyrin III. This is Coproporphyrin III ferrochelatase from Listeria monocytogenes serovar 1/2a (strain ATCC BAA-679 / EGD-e).